Consider the following 109-residue polypeptide: uncharacterized protein (109 aa).

Residues 87-106 traverse the membrane as a helical segment; the sequence is WCSVGTAAAVGIFIGALLSM.

The protein belongs to the ElaB/YgaM/YqjD family. In terms of assembly, may bind to ribosomes.

Its subcellular location is the cell inner membrane. This is an uncharacterized protein from Escherichia coli O157:H7.